The following is a 105-amino-acid chain: Guanyl-specific ribonuclease Ms (105 aa).

Cystine bridges form between Cys3-Cys11 and Cys7-Cys102. Residue His39 is part of the active site. The active-site Proton acceptor is the Glu57. His91 functions as the Proton donor in the catalytic mechanism.

Belongs to the ribonuclease N1/T1 family.

It carries out the reaction [RNA] containing guanosine + H2O = an [RNA fragment]-3'-guanosine-3'-phosphate + a 5'-hydroxy-ribonucleotide-3'-[RNA fragment].. This is Guanyl-specific ribonuclease Ms from Aspergillus phoenicis (Aspergillus saitoi).